A 423-amino-acid polypeptide reads, in one-letter code: Serine hydroxymethyltransferase (423 aa).

Residue Gly-121–Ile-123 coordinates (6S)-5,6,7,8-tetrahydrofolate. Lys-227 is subject to N6-(pyridoxal phosphate)lysine. Glu-242 lines the (6S)-5,6,7,8-tetrahydrofolate pocket.

Belongs to the SHMT family. Homodimer. It depends on pyridoxal 5'-phosphate as a cofactor.

It localises to the cytoplasm. It carries out the reaction 5,10-methylenetetrahydromethanopterin + glycine + H2O = 5,6,7,8-tetrahydromethanopterin + L-serine. It functions in the pathway amino-acid biosynthesis; glycine biosynthesis; glycine from L-serine: step 1/1. Catalyzes the reversible interconversion of serine and glycine with tetrahydromethanopterin (H4MPT) serving as the one-carbon carrier. Cannot use tetrahydrofolate (THF or H4PteGlu) instead of H4MPT as the pteridine substrate. Also probably exhibits a pteridine-independent aldolase activity toward beta-hydroxyamino acids, producing glycine and aldehydes, via a retro-aldol mechanism. This chain is Serine hydroxymethyltransferase, found in Methanothermobacter thermautotrophicus (strain ATCC 29096 / DSM 1053 / JCM 10044 / NBRC 100330 / Delta H) (Methanobacterium thermoautotrophicum).